A 90-amino-acid polypeptide reads, in one-letter code: Small regulatory polypeptide of amino acid response (90 aa).

At 1–18 (MGAKAPRGPKVAQWAMET) the chain is on the lumenal side. A helical membrane pass occupies residues 19–39 (AVIGVVVVLFVVTVAITCVLC). The Cytoplasmic portion of the chain corresponds to 40–90 (CFSCDSRAQDPQGGPGRSFTVATFRQEASLFTGPVRHAQPVPSAQDFWTFM).

As to quaternary structure, interacts with components of the lysosomal V-ATPase complex. Interacts with ATP6V0A1. Interacts with ATP6V0A2. In terms of tissue distribution, highly expressed in lung, heart and skeletal muscle.

It localises to the late endosome membrane. The protein localises to the lysosome membrane. Its function is as follows. Negative regulator of amino acid sensing and mTORC1, a signaling complex promoting cell growth in response to growth factors, energy levels and amino acids. Negatively regulates mTORC1 activation by inhibiting recruitment of mTORC1 to lysosomes upon stimulation with amino acids: acts by promoting the formation of a tightly bound supercomplex composed of the lysosomal V-ATPase, Ragulator and Rag GTPases, preventing recruitment of mTORC1. Acts as a regulator of muscle regeneration following injury by regulating mTORC1 activation. The chain is Small regulatory polypeptide of amino acid response from Homo sapiens (Human).